Reading from the N-terminus, the 210-residue chain is S-norcoclaurine synthase (210 aa).

Residues 1-19 form the signal peptide; it reads MMKMEVVFVFLMLLGTINC. 108 to 110 contacts dopamine; it reads YKE. Lys-122 functions as the Proton donor in the catalytic mechanism. Asp-141 contributes to the (4-hydroxyphenyl)acetaldehyde binding site.

This sequence belongs to the BetVI family. As to quaternary structure, concentration-dependent dimerization, but mainly monomeric at concentrations around 10 uM. Expressed most abundantly in the rhizomes and to a lesser extent in petioles, roots, leaves and flower buds.

The catalysed reaction is (4-hydroxyphenyl)acetaldehyde + dopamine = (S)-norcoclaurine + H2O. Involved in the biosynthesis of the common precursor of all benzylisoquinoline alkaloids such as morphine, sanguinarine, codeine or berberine. Condenses dopamine and 4-hydroxyphenylacetaldehyde. This chain is S-norcoclaurine synthase, found in Thalictrum flavum subsp. glaucum (Yellow meadow rue).